The sequence spans 776 residues: Endonuclease MutS2 (776 aa).

ATP is bound at residue 330–337 (GPNTGGKT). The Smr domain occupies 701–776 (LDLRGMRYEE…GSGATIAILK (76 aa)).

It belongs to the DNA mismatch repair MutS family. MutS2 subfamily. As to quaternary structure, homodimer. Binds to stalled ribosomes, contacting rRNA.

In terms of biological role, endonuclease that is involved in the suppression of homologous recombination and thus may have a key role in the control of bacterial genetic diversity. Acts as a ribosome collision sensor, splitting the ribosome into its 2 subunits. Detects stalled/collided 70S ribosomes which it binds and splits by an ATP-hydrolysis driven conformational change. Acts upstream of the ribosome quality control system (RQC), a ribosome-associated complex that mediates the extraction of incompletely synthesized nascent chains from stalled ribosomes and their subsequent degradation. Probably generates substrates for RQC. The protein is Endonuclease MutS2 of Lactococcus lactis subsp. lactis (strain IL1403) (Streptococcus lactis).